The following is an 831-amino-acid chain: Heat shock 70 kDa protein 14 (831 aa).

2 disordered regions span residues 503–579 and 786–831; these read EEVE…KKKV and TKPK…EGST. Positions 509–526 are enriched in basic and acidic residues; sequence VTKEHSEETTKMDSDKAS. Ser533 carries the phosphoserine modification.

Belongs to the heat shock protein 70 (TC 1.A.33) family. HSP110/SSE subfamily. In terms of assembly, interacts with HTT1 in both cytoplasm and nucleus. Constitutively expressed.

The protein resides in the cytoplasm. It is found in the nucleus. Functionally, in cooperation with other chaperones, Hsp70s are key components that facilitate folding of de novo synthesized proteins, assist translocation of precursor proteins into organelles, and are responsible for degradation of damaged protein under stress conditions. The sequence is that of Heat shock 70 kDa protein 14 (HSP70-14) from Arabidopsis thaliana (Mouse-ear cress).